Here is a 149-residue protein sequence, read N- to C-terminus: 3-dehydroquinate dehydratase (149 aa).

Tyrosine 26 (proton acceptor) is an active-site residue. Residues asparagine 77, histidine 83, and aspartate 90 each contribute to the substrate site. Catalysis depends on histidine 103, which acts as the Proton donor. Substrate is bound by residues 104–105 and arginine 114; that span reads LS.

The protein belongs to the type-II 3-dehydroquinase family. As to quaternary structure, homododecamer.

It carries out the reaction 3-dehydroquinate = 3-dehydroshikimate + H2O. The protein operates within metabolic intermediate biosynthesis; chorismate biosynthesis; chorismate from D-erythrose 4-phosphate and phosphoenolpyruvate: step 3/7. Functionally, catalyzes a trans-dehydration via an enolate intermediate. This chain is 3-dehydroquinate dehydratase, found in Aliivibrio fischeri (strain MJ11) (Vibrio fischeri).